The chain runs to 384 residues: Glucans biosynthesis protein C (384 aa).

10 helical membrane-spanning segments follow: residues 17-37 (AWLMLLGIPFHISLIYSTHSW), 54-74 (FIHAFRMQVFFVISGYFSYML), 91-111 (VGIPMLTAIPLLTLPQFILLQ), 140-160 (LWFLLVLVILTTVSIGIFTWF), 173-193 (AISLAKLSLIFFLLGVAYAAI), 212-232 (FIVMQTLFYVPFFILGALAFI), 240-260 (FTTPSRGCTLGAAVAFIAYLL), 274-294 (TESVITMVMGLWMVNVVFSLG), 311-331 (ASLFIYLVHHPLTLFFGAYIT), and 338-358 (LIGFLCGLIFVMGIALILYEI).

It belongs to the acyltransferase 3 family. OpgC subfamily.

The protein resides in the cell membrane. The protein operates within glycan metabolism; osmoregulated periplasmic glucan (OPG) biosynthesis. Functionally, necessary for the succinyl substitution of periplasmic glucans. Could catalyze the transfer of succinyl residues from the cytoplasmic side of the membrane to the nascent glucan backbones on the periplasmic side of the membrane. This is Glucans biosynthesis protein C from Salmonella heidelberg (strain SL476).